Reading from the N-terminus, the 183-residue chain is Bifunctional protein PyrR (183 aa).

Positions 102–114 match the PRPP-binding motif; sequence VVLVDDVLYTGRT.

The protein belongs to the purine/pyrimidine phosphoribosyltransferase family. PyrR subfamily. As to quaternary structure, homodimer and homohexamer; in equilibrium.

It carries out the reaction UMP + diphosphate = 5-phospho-alpha-D-ribose 1-diphosphate + uracil. Its function is as follows. Regulates transcriptional attenuation of the pyrimidine nucleotide (pyr) operon by binding in a uridine-dependent manner to specific sites on pyr mRNA. This disrupts an antiterminator hairpin in the RNA and favors formation of a downstream transcription terminator, leading to a reduced expression of downstream genes. Also displays a weak uracil phosphoribosyltransferase activity which is not physiologically significant. The polypeptide is Bifunctional protein PyrR (Listeria welshimeri serovar 6b (strain ATCC 35897 / DSM 20650 / CCUG 15529 / CIP 8149 / NCTC 11857 / SLCC 5334 / V8)).